A 264-amino-acid chain; its full sequence is Thymidylate synthase (264 aa).

Residues Arg21 and 126–127 (RR) contribute to the dUMP site. Residue Cys146 is the Nucleophile of the active site. DUMP-binding positions include 166-169 (RSAD), Asn177, and 207-209 (HLY). A (6R)-5,10-methylene-5,6,7,8-tetrahydrofolate-binding site is contributed by Asp169. Ala263 is a (6R)-5,10-methylene-5,6,7,8-tetrahydrofolate binding site.

Belongs to the thymidylate synthase family. Bacterial-type ThyA subfamily. In terms of assembly, homodimer.

The protein resides in the cytoplasm. It carries out the reaction dUMP + (6R)-5,10-methylene-5,6,7,8-tetrahydrofolate = 7,8-dihydrofolate + dTMP. It functions in the pathway pyrimidine metabolism; dTTP biosynthesis. Its function is as follows. Catalyzes the reductive methylation of 2'-deoxyuridine-5'-monophosphate (dUMP) to 2'-deoxythymidine-5'-monophosphate (dTMP) while utilizing 5,10-methylenetetrahydrofolate (mTHF) as the methyl donor and reductant in the reaction, yielding dihydrofolate (DHF) as a by-product. This enzymatic reaction provides an intracellular de novo source of dTMP, an essential precursor for DNA biosynthesis. This Bradyrhizobium sp. (strain ORS 278) protein is Thymidylate synthase.